We begin with the raw amino-acid sequence, 950 residues long: Protein translocase subunit SecA (950 aa).

Residues glutamine 87, 105 to 109 (GEGKT), and aspartate 524 each bind ATP. Residues 908–932 (GAAPVPAEARNPNDPSTWGKVGRNE) form a disordered region. Zn(2+)-binding residues include cysteine 934, cysteine 936, cysteine 945, and histidine 946.

Belongs to the SecA family. Monomer and homodimer. Part of the essential Sec protein translocation apparatus which comprises SecA, SecYEG and auxiliary proteins SecDF-YajC and YidC. It depends on Zn(2+) as a cofactor.

The protein resides in the cell inner membrane. It is found in the cytoplasm. It catalyses the reaction ATP + H2O + cellular proteinSide 1 = ADP + phosphate + cellular proteinSide 2.. Part of the Sec protein translocase complex. Interacts with the SecYEG preprotein conducting channel. Has a central role in coupling the hydrolysis of ATP to the transfer of proteins into and across the cell membrane, serving both as a receptor for the preprotein-SecB complex and as an ATP-driven molecular motor driving the stepwise translocation of polypeptide chains across the membrane. This chain is Protein translocase subunit SecA, found in Bradyrhizobium sp. (strain BTAi1 / ATCC BAA-1182).